The sequence spans 242 residues: Small ribosomal subunit protein uS2 (242 aa).

The protein belongs to the universal ribosomal protein uS2 family.

The protein is Small ribosomal subunit protein uS2 of Tolumonas auensis (strain DSM 9187 / NBRC 110442 / TA 4).